A 68-amino-acid polypeptide reads, in one-letter code: Large ribosomal subunit protein bL35 (68 aa).

Belongs to the bacterial ribosomal protein bL35 family.

The sequence is that of Large ribosomal subunit protein bL35 from Rickettsia conorii (strain ATCC VR-613 / Malish 7).